The primary structure comprises 730 residues: Probable G-protein coupled receptor 149 (730 aa).

The Extracellular segment spans residues 1–34 (MSFFLSNLTNDSRLWKVSHNSTDLMNSPETLTLS). N-linked (GlcNAc...) asparagine glycosylation is found at Asn-7, Asn-10, and Asn-20. Residues 35 to 55 (LFCLICLMTLVALVGSIFSLV) traverse the membrane as a helical segment. Over 56 to 68 (SLLTMQYRTVVSM) the chain is Cytoplasmic. Residues 69–89 (LVTSWSVDDLLSVLSVAIFMV) traverse the membrane as a helical segment. The Extracellular segment spans residues 90–108 (LQWPREAPGYFQSLCTTSA). The cysteines at positions 104 and 181 are disulfide-linked. Residues 109–131 (LLYMCQGLSSNLKATLIVFYNFY) traverse the membrane as a helical segment. Residues 132 to 148 (TMHRTVVSQSSSWRSGQ) lie on the Cytoplasmic side of the membrane. The chain crosses the membrane as a helical span at residues 149–169 (VLGVALTVWAVSLLLASLPLC). Topologically, residues 170–188 (GWGVFVRTPWGCLTDCSSP) are extracellular. A helical transmembrane segment spans residues 189–209 (YVLLLFAVYASAFGLLAVLSV). At 210–308 (PLTHQLLCSE…SFPVSLAQKR (99 aa)) the chain is on the cytoplasmic side. A helical transmembrane segment spans residues 309–329 (FALILALTKVILWLPMMIHMV). Topologically, residues 330–340 (VKHVVGFQSLP) are extracellular. The helical transmembrane segment at 341 to 361 (VDMLSFLLTLLASTVTPVFVL) threads the bilayer. The Cytoplasmic segment spans residues 362 to 730 (SKRWAHLPCG…RKREAESKGN (369 aa)).

Belongs to the G-protein coupled receptor 1 family. Expressed exclusively in brain and testis.

The protein localises to the cell membrane. In terms of biological role, orphan receptor. The polypeptide is Probable G-protein coupled receptor 149 (Gpr149) (Rattus norvegicus (Rat)).